We begin with the raw amino-acid sequence, 211 residues long: MPTIIMDSCNYTRLGLSDYMSSKGVKKKNITSVSDIEQLQQRCEQLKPGVVFINEDCFIHETDSSERIRSIINQHPETLFFIFMAISNIHFEEYLYVRKNLIITSKAIKPSTLDSLLSTYLQKKLNMSPRISSGLDVHPLTLSQTESNMLKMWMSGHDTIQISDKMQIKAKTVSSHKGNIKRKIKTHNKQVIYHVVRLTDNVTSGIYVNVR.

The HTH luxR-type domain maps to 135–200 (LDVHPLTLSQ…VIYHVVRLTD (66 aa)). The H-T-H motif DNA-binding region spans 159 to 178 (TIQISDKMQIKAKTVSSHKG).

The protein belongs to the RcsA family.

In terms of biological role, component of the Rcs signaling system, which controls transcription of numerous genes. Binds to DNA to regulate expression of genes. This Pantoea stewartii subsp. stewartii (Erwinia stewartii) protein is Transcriptional regulatory protein RcsA.